We begin with the raw amino-acid sequence, 367 residues long: Mitochondrial distribution and morphology protein 34 (367 aa).

The region spanning 1-197 (MSFNFTWPEF…LPSIIHRLSQ (197 aa)) is the SMP-LTD domain. Disordered stretches follow at residues 267 to 311 (QGLK…ALSS) and 347 to 367 (PAHR…FHLS). Positions 286–302 (FHTTSRVRVPSSLESNA) are enriched in polar residues.

Belongs to the MDM34 family. In terms of assembly, component of the ER-mitochondria encounter structure (ERMES) or MDM complex, composed of MMM1, MDM10, MDM12 and MDM34.

It localises to the mitochondrion outer membrane. In terms of biological role, component of the ERMES/MDM complex, which serves as a molecular tether to connect the endoplasmic reticulum (ER) and mitochondria. Components of this complex are involved in the control of mitochondrial shape and protein biogenesis, and function in nonvesicular lipid trafficking between the ER and mitochondria. MDM34 is required for the interaction of the ER-resident membrane protein MMM1 and the outer mitochondrial membrane-resident beta-barrel protein MDM10. This Malassezia globosa (strain ATCC MYA-4612 / CBS 7966) (Dandruff-associated fungus) protein is Mitochondrial distribution and morphology protein 34.